Consider the following 1274-residue polypeptide: Enamelin (1274 aa).

A signal peptide spans 1-38 (MLLLQCRNPTSPPKPCGLVPNVKMSLLVFLGLLGVSAA). Pro residues predominate over residues 103–115 (PVPNGWQQPPMPN). Disordered regions lie at residues 103 to 413 (PVPN…VGAN), 476 to 610 (IGAN…NNPN), 668 to 700 (PFQSETKKPELKHGTHQPAYPKKIPSPTRKHFP), 712 to 734 (LPPLKEDYGRQDENLRHPSYGSR), and 753 to 814 (YIKS…EEMN). Over residues 117 to 127 (PSKTDQTQETA) the composition is skewed to polar residues. The span at 128–142 (KPNQTNPQEPQPQKQ) shows a compositional bias: low complexity. N-linked (GlcNAc...) asparagine glycosylation is present at N130. Basic and acidic residues predominate over residues 143–158 (PLKEPPNEAARAKDDA). Residues 174–185 (YPQPPWPIPQRG) are compositionally biased toward pro residues. A phosphoserine mark is found at S196 and S219. Over residues 225-239 (DYEKPKEKDPPKPED) the composition is skewed to basic and acidic residues. The span at 249 to 272 (ASTNSTVPDANATQSIPEGGNDTS) shows a compositional bias: polar residues. N-linked (GlcNAc...) asparagine glycosylation is found at N252, N259, and N269. Residues 273–287 (PIGNTGPGPNAGNNP) are compositionally biased toward low complexity. An N-linked (GlcNAc...) asparagine glycan is attached at N300. Over residues 318-330 (PNIYENYPYPNYP) the composition is skewed to low complexity. Composition is skewed to polar residues over residues 331–344 (SERQWQTTGTQGPR), 486–503 (SIGTNPAANKPSIGTNPA), 522–549 (TNPSSNQPFLRSNQASNKPFMRSNQASN), and 565–574 (VTVSHNMKTQ). Positions 575 to 587 (NPKEKSLGQKERT) are enriched in basic and acidic residues. Residues 588–598 (VTPTKDASNPW) are compositionally biased toward polar residues. Residues 715-727 (LKEDYGRQDENLR) show a composition bias toward basic and acidic residues. The span at 753–766 (YIKSNPWDKSSPST) shows a compositional bias: polar residues. Positions 787-801 (QYNEEDPIDPNEDES) are enriched in acidic residues. N1066 carries N-linked (GlcNAc...) asparagine glycosylation. 2 disordered regions span residues 1071 to 1097 (KLTAESPNPSPFGDGVPTVRKNTPYSG) and 1109 to 1128 (SEASSSQPKNTPCLKSDLGG).

Post-translationally, phosphorylated by FAM20C in vitro. As to expression, expressed in developing teeth.

Its subcellular location is the secreted. The protein resides in the extracellular space. The protein localises to the extracellular matrix. Involved in the mineralization and structural organization of enamel. Involved in the extension of enamel during the secretory stage of dental enamel formation. In Mus musculus (Mouse), this protein is Enamelin (Enam).